We begin with the raw amino-acid sequence, 500 residues long: Xylan O-acetyltransferase 2 (500 aa).

Topologically, residues 1–25 (MGLPGRRNPLLSARRAAASLRRSRR) are cytoplasmic. Residues 26–43 (LPVYVAAVFFVASVLLMF) form a helical; Signal-anchor for type II membrane protein membrane-spanning segment. The Lumenal portion of the chain corresponds to 44-500 (RDEILYLTTA…RPPAAAGHVA (457 aa)). The segment at 84–116 (PVLLGHGGKPEKHHSVTERHRPKVSAKRRPNKK) is disordered. Over residues 91–102 (GKPEKHHSVTER) the composition is skewed to basic and acidic residues. Residues 103–116 (HRPKVSAKRRPNKK) are compositionally biased toward basic residues. Cystine bridges form between C143/C194, C165/C231, C174/C472, and C388/C468. Residues N144 and N154 are each glycosylated (N-linked (GlcNAc...) asparagine). Residues 218–220 (GDS) carry the GDS motif motif. S220 (nucleophile) is an active-site residue. N-linked (GlcNAc...) asparagine glycans are attached at residues N260 and N416. The active-site Proton donor is the D467. Residues 467–470 (DCIH) carry the DXXH motif motif. The active-site Proton acceptor is the H470.

The protein belongs to the PC-esterase family. TBL subfamily. Expressed at low levels in roots and leaves.

It localises to the golgi apparatus membrane. Functionally, xylan acetyltransferase required for 2-O- and 3-O-monoacetylation of xylosyl residues in xylan. Catalyzes the 2-O-acetylation of xylan, followed by nonenzymatic acetyl migration to the O-3 position, resulting in products that are monoacetylated at both O-2 and O-3 positions. The protein is Xylan O-acetyltransferase 2 of Oryza sativa subsp. japonica (Rice).